The sequence spans 309 residues: Ubiquitin-conjugating enzyme E2 32 (309 aa).

One can recognise a UBC core domain in the interval 11–166; the sequence is PAVKRILQEV…ERQKIIDEIH (156 aa). Catalysis depends on cysteine 93, which acts as the Glycyl thioester intermediate. The chain crosses the membrane as a helical span at residues 275–295; the sequence is FTWAAVGLTIAIMVLLLKKFI.

It belongs to the ubiquitin-conjugating enzyme family.

It is found in the membrane. The enzyme catalyses S-ubiquitinyl-[E1 ubiquitin-activating enzyme]-L-cysteine + [E2 ubiquitin-conjugating enzyme]-L-cysteine = [E1 ubiquitin-activating enzyme]-L-cysteine + S-ubiquitinyl-[E2 ubiquitin-conjugating enzyme]-L-cysteine.. The protein operates within protein modification; protein ubiquitination. Functionally, accepts the ubiquitin from the E1 complex and catalyzes its covalent attachment to other proteins. The polypeptide is Ubiquitin-conjugating enzyme E2 32 (UBC32) (Arabidopsis thaliana (Mouse-ear cress)).